Here is a 798-residue protein sequence, read N- to C-terminus: Integrin beta-1 (798 aa).

The first 20 residues, 1–20 (MNLQLIFWIGLISSVCYVFG), serve as a signal peptide directing secretion. Topologically, residues 21-728 (QADENRCLKA…ETPECPTGPD (708 aa)) are extracellular. Positions 26–76 (RCLKANAKSCGECIQAGPNCGWCTNSTFLQEGMPTSARCDDLEALRKKGCH) constitute a PSI domain. 28 cysteine pairs are disulfide-bonded: C27–C45, C35–C464, C38–C64, C48–C75, C207–C213, C261–C301, C401–C415, C435–C462, C466–C486, C477–C489, C491–C500, C502–C533, C516–C531, C525–C536, C538–C553, C555–C576, C560–C574, C568–C579, C581–C590, C592–C615, C599–C613, C607–C618, C620–C630, C633–C636, C640–C691, C646–C665, C649–C661, and C699–C723. N50 carries N-linked (GlcNAc...) asparagine glycosylation. A compositionally biased stretch (basic and acidic residues) spans 75-84 (CHPDDIENPR). The disordered stretch occupies residues 75–107 (CHPDDIENPRGSKNIKKNKNVTNRSKGTAEKLQ). Residues N94 and N97 are each glycosylated (N-linked (GlcNAc...) asparagine). The VWFA domain maps to 140-378 (DYPIDLYYLM…QLIIDAYNSL (239 aa)). Residues S152 and S154 each contribute to the Mg(2+) site. Residues S154, D157, D158, and E189 each contribute to the Ca(2+) site. Residues 207–213 (CTSEQNC) form a CX3CL1-binding region. N212 carries an N-linked (GlcNAc...) asparagine glycan. Residues N244, D246, P248, and E249 each contribute to the Ca(2+) site. E249 is a Mg(2+) binding site. N269 is a glycosylation site (N-linked (GlcNAc...) asparagine). A CX3CL1-binding region spans residues 295 to 314 (LPNDGHCHLENDVYTMSHYY). A Ca(2+)-binding site is contributed by A362. N-linked (GlcNAc...) asparagine glycans are attached at residues N363, N406, and N417. The interaction with TMEM182 stretch occupies residues 383–465 (ILENSKLPEG…IILQFICECE (83 aa)). 4 consecutive I-EGF domains span residues 466-501 (CQSE…RHCE), 502-554 (CSTD…KFCE), 555-591 (CDNF…SACD), and 592-631 (CSLD…PTCE). N-linked (GlcNAc...) asparagine glycosylation is present at N481. N-linked (GlcNAc...) asparagine glycosylation is present at N520. N-linked (GlcNAc...) asparagine glycosylation is present at N584. An N-linked (GlcNAc...) asparagine glycan is attached at N669. Residues 729-749 (IIPIVAGVVAGIVLIGLALLL) traverse the membrane as a helical segment. Topologically, residues 750 to 798 (IWKLLMIIHDRREFAKFEKEKMNAKWDTGENPIYKSAVTTVVNPKYEGK) are cytoplasmic. The segment at 762 to 767 (EFAKFE) is signal for sorting from recycling endosomes; interaction with ACAP1. At T777 the chain carries Phosphothreonine. The residue at position 783 (Y783) is a Phosphotyrosine. S785 bears the Phosphoserine mark. The tract at residues 785–792 (SAVTTVVN) is interaction with ITGB1BP1. T789 carries the phosphothreonine modification. N6-acetyllysine; alternate is present on K794. K794 participates in a covalent cross-link: Glycyl lysine isopeptide (Lys-Gly) (interchain with G-Cter in SUMO1); alternate.

This sequence belongs to the integrin beta chain family. As to quaternary structure, interacts with seprase FAP (seprase); the interaction occurs at the cell surface of invadopodia membrane in a collagen-dependent manner. Heterodimer of an alpha and a beta subunit. Beta-1 associates with either alpha-1, alpha-2, alpha-3, alpha-4, alpha-5, alpha-6, alpha-7, alpha-8, alpha-9, alpha-10, alpha-11 or alpha-V. ITGA6:ITGB1 is found in a complex with CD9; interaction takes place in oocytes and is involved in sperm-egg fusion. Binds LGALS3BP and NMRK2, when associated with alpha-7, but not with alpha-5. Interacts with FLNA, FLNB, FLNC and RANBP9. Interacts with KRT1 in the presence of RACK1 and SRC. Interacts with JAML; integrin alpha-4/beta-1 may regulate leukocyte to endothelial cells adhesion by controlling JAML homodimerization. Interacts with RAB21. Interacts (via the cytoplasmic region) with RAB25 (via the hypervariable C-terminal region). Interacts with MYO10. Interacts with ITGB1BP1 (via C-terminal region); the interaction is a prerequisite for focal adhesion disassembly. Interacts with TLN1; the interaction is prevented by competitive binding of ITGB1BP1. Interacts with ACAP1; required for ITGB1 recycling. Interacts with ASAP3. Interacts with FERMT2; the interaction is inhibited in presence of ITGB1BP1. Interacts with DAB2. Interacts with FGR and HCK. Interacts with alpha-7A and alpha-7B in adult skeletal muscle. Interacts with alpha-7B in cardiomyocytes of adult heart. Interacts with EMP2; the interaction may be direct or indirect and ITGB1 has a heterodimer form. ITGA5:ITGB1 interacts with CCN3. ITGA4:ITGB1 is found in a ternary complex with CX3CR1 and CX3CL1. ITGA5:ITGB1 interacts with FBN1. ITGA5:ITGB1 interacts with IL1B. Interacts with MDK. ITGA4:ITGB1 interacts with MDK; this interaction mediates MDK-induced osteoblast cells migration through PXN phosphorylation. ITGA6:ITGB1 interacts with MDK; this interaction mediates MDK-induced neurite-outgrowth. ITGA5:ITGB1 interacts with ACE2. Interacts with TMEM182 and LAMB1. Interacts with tensin TNS3; TNS3 also interacts with PEAK1, thus acting as an adapter molecule to bridge the association of PEAK1 with ITGB1. Interacts with tensin TNS4; the interaction displaces tensin TNS3 from the ITGB1 cytoplasmic tail and promotes ITGB1 stability. Integrin ITGA9:ITGB1 interacts with SPP1/OPN (via N-terminus). Integrin ITGA9:ITGB1 interacts with TNC/TNFN3 (via the 3rd Fibronectin type-III domain). Integrins ITGA4:ITGB1 and ITGA9:ITGB1 interact with SVEP1 (via Sushi domain 21); thereby inhibit Ca(2+) intracellular signaling and as a result repress vasocontraction. ITGA4:ITGB1 and ITGA5:ITGB1 interacts with SELP. Interacts with CD248. ITGA5:ITGB1 interacts with IGFBP1. ITGA4:ITGB1 interacts with BCAM. Interacts with ADGRG6. As to expression, expressed in the spleen, thymus, alveolar macrophages, bone marrow, liver and kidney.

It localises to the cell membrane. Its subcellular location is the cell projection. The protein resides in the invadopodium membrane. It is found in the ruffle membrane. The protein localises to the recycling endosome. It localises to the melanosome. Its subcellular location is the lamellipodium. The protein resides in the ruffle. It is found in the cell junction. The protein localises to the focal adhesion. Functionally, integrins alpha-1/beta-1, alpha-2/beta-1, alpha-10/beta-1 and alpha-11/beta-1 are receptors for collagen. Integrins alpha-1/beta-1 and alpha-2/beta-2 recognize the proline-hydroxylated sequence G-F-P-G-E-R in collagen. Integrins alpha-2/beta-1, alpha-3/beta-1, alpha-4/beta-1, alpha-5/beta-1, alpha-8/beta-1, alpha-10/beta-1, alpha-11/beta-1 and alpha-V/beta-1 are receptors for fibronectin. Alpha-4/beta-1 recognizes one or more domains within the alternatively spliced CS-1 and CS-5 regions of fibronectin. Integrin alpha-5/beta-1 is a receptor for fibrinogen. Integrin alpha-1/beta-1, alpha-2/beta-1, alpha-6/beta-1 and alpha-7/beta-1 are receptors for lamimin. Integrin alpha-6/beta-1 (ITGA6:ITGB1) is present in oocytes and is involved in sperm-egg fusion. Integrin alpha-4/beta-1 is a receptor for VCAM1 and recognizes the sequence Q-I-D-S in VCAM1. Integrin alpha-9/beta-1 is a receptor for VCAM1, cytotactin and osteopontin. It recognizes the sequence A-E-I-D-G-I-E-L in cytotactin. Integrin alpha-3/beta-1 is a receptor for epiligrin, thrombospondin and CSPG4. Integrin alpha-3/beta-1 provides a docking site for FAP (seprase) at invadopodia plasma membranes in a collagen-dependent manner and hence may participate in the adhesion, formation of invadopodia and matrix degradation processes, promoting cell invasion. Alpha-3/beta-1 may mediate with LGALS3 the stimulation by CSPG4 of endothelial cells migration. Integrin alpha-V/beta-1 is a receptor for vitronectin. Beta-1 integrins recognize the sequence R-G-D in a wide array of ligands. When associated with alpha-7/beta-1 integrin, regulates cell adhesion and laminin matrix deposition. Involved in promoting endothelial cell motility and angiogenesis. Involved in osteoblast compaction through the fibronectin fibrillogenesis cell-mediated matrix assembly process and the formation of mineralized bone nodules. May be involved in up-regulation of the activity of kinases such as PKC via binding to KRT1. Together with KRT1 and RACK1, serves as a platform for SRC activation or inactivation. Plays a mechanistic adhesive role during telophase, required for the successful completion of cytokinesis. ITGA4:ITGB1 binds to fractalkine (CX3CL1) and may act as its coreceptor in CX3CR1-dependent fractalkine signaling. ITGA4:ITGB1 and ITGA5:ITGB1 bind to PLA2G2A via a site (site 2) which is distinct from the classical ligand-binding site (site 1) and this induces integrin conformational changes and enhanced ligand binding to site 1. ITGA5:ITGB1 acts as a receptor for fibrillin-1 (FBN1) and mediates R-G-D-dependent cell adhesion to FBN1. ITGA5:ITGB1 acts as a receptor for fibronectin FN1 and mediates R-G-D-dependent cell adhesion to FN1. ITGA5:ITGB1 is a receptor for IL1B and binding is essential for IL1B signaling. ITGA5:ITGB3 is a receptor for soluble CD40LG and is required for CD40/CD40LG signaling. Plays an important role in myoblast differentiation and fusion during skeletal myogenesis. ITGA9:ITGB1 may play a crucial role in SVEP1/polydom-mediated myoblast cell adhesion. Integrins ITGA9:ITGB1 and ITGA4:ITGB1 repress PRKCA-mediated L-type voltage-gated channel Ca(2+) influx and ROCK-mediated calcium sensitivity in vascular smooth muscle cells via their interaction with SVEP1, thereby inhibit vasocontraction. The chain is Integrin beta-1 (ITGB1) from Sus scrofa (Pig).